A 710-amino-acid chain; its full sequence is Bifunctional sesterterpene synthase (710 aa).

Residues 1 to 327 are stellata-2,6,19-trien synthase; that stretch reads MEFKFSAVVD…RYYTDASFSE (327 aa). Mg(2+)-binding residues include Asp-92 and Asp-96. Residues Asp-92, Asp-96, 181–184, and 229–233 each bind substrate; these read RVHD and SWDKE. Residues 92–96 carry the DDXXD motif 1 motif; the sequence is DDVTD. An NSE motif motif is present at residues 278 to 286; that stretch reads YLRVFEEVK. 318 to 319 is a binding site for substrate; the sequence is RY. The interval 328-709 is geranylgeranyl diphosphate synthase; that stretch reads RQLEWMKNGI…LRLIFELLRN (382 aa). Positions 365-404 are disordered; the sequence is HHAVTSNGTGTGSHDTLNGDGTAHENNSRDASIPGRTTNG. The span at 368–380 shows a compositional bias: polar residues; sequence VTSNGTGTGSHDT. 3 residues coordinate isopentenyl diphosphate: Lys-430, Arg-433, and His-462. Mg(2+) is bound by residues Asp-469 and Asp-473. The DDXXD motif 2 motif lies at 469-473; it reads DDLED. Residue Arg-478 coordinates dimethylallyl diphosphate. Arg-479 contacts isopentenyl diphosphate. Positions 556, 557, 592, 599, 609, and 619 each coordinate dimethylallyl diphosphate.

The protein in the C-terminal section; belongs to the FPP/GGPP synthase family. It in the N-terminal section; belongs to the terpene synthase family. Hexamer.

It catalyses the reaction 4 isopentenyl diphosphate + dimethylallyl diphosphate = (2E,6E,10E,14E)-geranylfarnesyl diphosphate + 4 diphosphate. The catalysed reaction is (2E,6E,10E,14E)-geranylfarnesyl diphosphate = variecoladiene + diphosphate. It functions in the pathway secondary metabolite biosynthesis; terpenoid biosynthesis. Its function is as follows. Multifunctional sesterterpene synthase; part of the gene cluster that mediates the biosynthesis of the sesterterpene variecolin. The first step in the pathway is performed by the variecoladiene synthase vrcA that possesses both prenyl transferase and terpene cyclase activity, converting isopentenyl diphosphate and dimethylallyl diphosphate into geranylfarnesyl pyrophosphate (GFPP) and then converting GFPP into the tetracyclic variecoladiene. The cytochrome P450 monooxygenase vrcB then catalyzes multiple oxidations at C-5 and C-20 positions to yield variecolin. This is Bifunctional sesterterpene synthase from Aspergillus aculeatus (strain ATCC 16872 / CBS 172.66 / WB 5094).